The following is a 355-amino-acid chain: Peptide chain release factor 1 (355 aa).

The residue at position 232 (Gln-232) is an N5-methylglutamine.

The protein belongs to the prokaryotic/mitochondrial release factor family. Methylated by PrmC. Methylation increases the termination efficiency of RF1.

Its subcellular location is the cytoplasm. Peptide chain release factor 1 directs the termination of translation in response to the peptide chain termination codons UAG and UAA. The protein is Peptide chain release factor 1 of Thermobifida fusca (strain YX).